Reading from the N-terminus, the 767-residue chain is MPVFTASFQCVTLFGQPASAADAQPLLQGQRPFLHLHARRRRPCGPMLISKSPPYPASEETREWEADGQHEHTDELRETTTTMIDGIRTALRSIGEGEISISAYDTSLVALLKRLDGGDGPQFPSTIDWIVQNQLPDGSWGDASFFMMGDRIMSTLACVVALKSWNIHTDKCERGLLFIQENMWRLAHEEEDWMLVGFEIALPSLLDMAKDLDLDIPYDEPALKAIYAERERKLAKIPRDVLHSMPTTLLHSLEGMVDLDWEKLLKLRCLDGSFHCSPASTATAFQQTGDQKCFEYLDGIVKKFNGGVPCIYPLDVYERLWAVDRLTRLGISRHFTSEIEDCLDYIFRNWTPDGLAHTKNCPVKDIDDTAMGFRLLRLYGYQVDPCVLKKFEKDGKFFCLHGESNPSSVTPMYNTYRASQLKFPGDDGVLGRAEVFCRSFLQDRRGSNRMKDKWAIAKDIPGEVEYAMDYPWKASLPRIETRLYLDQYGGSGDVWIGKVLHRMTLFCNDLYLKAAKADFSNFQKECRVELNGLRRWYLRSNLEKFGGTDPQTTLMTSYFLASANIFEANRAAERLGWARVALLADAVSSHFRRIGGPKNSTSNLEELISLVPFDDAYSGSLREAWKQWLMAWTAKESSQESIEGDTAILLVRAIEIFGGRHVLTGQRPDLWEYSQLEQLTSSICCKLSRRVLAQENGESTEKVEEIDQQVDLEMQELTRRVLQGCSAINRLTRETFLHVVKSFCYVAYCSPETIDSHIDKVIFQDVI.

The N-terminal 47 residues, 1 to 47 (MPVFTASFQCVTLFGQPASAADAQPLLQGQRPFLHLHARRRRPCGPM), are a transit peptide targeting the chloroplast. Residues 45–74 (GPMLISKSPPYPASEETREWEADGQHEHTD) form a disordered region. The segment covering 59 to 74 (EETREWEADGQHEHTD) has biased composition (basic and acidic residues). Residue Lys233 coordinates substrate. Mg(2+)-binding residues include Asp365 and Asp367. The short motif at 365-368 (DIDD) is the DXDD motif element. A substrate-binding site is contributed by Lys453.

It belongs to the terpene synthase family. The cofactor is Mg(2+).

Its subcellular location is the plastid. The protein resides in the chloroplast. The catalysed reaction is (2E,6E,10E)-geranylgeranyl diphosphate = 9alpha-copalyl diphosphate. Catalyzes the conversion of geranylgeranyl diphosphate to the phytoalexin precursor syn-copalyl diphosphate. Required for the biosynthesis of momilactones that exude from roots and act as allelochemicals against lowland weeds in paddy soil. In Oryza sativa subsp. japonica (Rice), this protein is Syn-copalyl diphosphate synthase, chloroplastic.